We begin with the raw amino-acid sequence, 104 residues long: Flagellar hook-basal body complex protein FliE (104 aa).

This sequence belongs to the FliE family.

Its subcellular location is the bacterial flagellum basal body. In Salmonella agona (strain SL483), this protein is Flagellar hook-basal body complex protein FliE.